Reading from the N-terminus, the 111-residue chain is Cornifelin homolog B (111 aa).

This sequence belongs to the cornifelin family.

The protein is Cornifelin homolog B (cnfn-b) of Xenopus laevis (African clawed frog).